A 901-amino-acid polypeptide reads, in one-letter code: HTH-type transcriptional regulator MalT (901 aa).

Position 39-46 (39-46) interacts with ATP; sequence SPAGYGKT. The HTH luxR-type domain occupies 829 to 894; the sequence is ELIRTSPLTQ…DAVQHAQQLL (66 aa). The H-T-H motif DNA-binding region spans 853–872; the sequence is NEQIAGELAVAATTIKTHIR.

The protein belongs to the MalT family. Monomer in solution. Oligomerizes to an active state in the presence of the positive effectors ATP and maltotriose.

With respect to regulation, activated by ATP and maltotriose, which are both required for DNA binding. Functionally, positively regulates the transcription of the maltose regulon whose gene products are responsible for uptake and catabolism of malto-oligosaccharides. Specifically binds to the promoter region of its target genes, recognizing a short DNA motif called the MalT box. This is HTH-type transcriptional regulator MalT from Salmonella choleraesuis (strain SC-B67).